The following is a 346-amino-acid chain: tRNA N6-adenosine threonylcarbamoyltransferase (346 aa).

Fe cation-binding residues include His111 and His115. Substrate-binding positions include 134 to 138 (LVSGG), Asp167, Gly180, and Asn279. Fe cation is bound at residue Asp307.

Belongs to the KAE1 / TsaD family. It depends on Fe(2+) as a cofactor.

Its subcellular location is the cytoplasm. The enzyme catalyses L-threonylcarbamoyladenylate + adenosine(37) in tRNA = N(6)-L-threonylcarbamoyladenosine(37) in tRNA + AMP + H(+). Required for the formation of a threonylcarbamoyl group on adenosine at position 37 (t(6)A37) in tRNAs that read codons beginning with adenine. Is involved in the transfer of the threonylcarbamoyl moiety of threonylcarbamoyl-AMP (TC-AMP) to the N6 group of A37, together with TsaE and TsaB. TsaD likely plays a direct catalytic role in this reaction. The protein is tRNA N6-adenosine threonylcarbamoyltransferase of Burkholderia cenocepacia (strain HI2424).